Reading from the N-terminus, the 694-residue chain is DNA-binding protein RFX2 (694 aa).

A DNA-binding region (RFX-type winged-helix) is located at residues 174-249 (HLQWLLDNYE…YHYYGIRLKP (76 aa)). Disordered stretches follow at residues 268–309 (QPIH…SQHH) and 659–694 (DDVS…MQEM). A compositionally biased stretch (polar residues) spans 288–299 (NTANSSQHTSPE). The span at 300 to 309 (QSVAAQSQHH) shows a compositional bias: low complexity.

This sequence belongs to the RFX family. In terms of assembly, homodimer. Heterodimer; heterodimerizes with other rfx proteins.

The protein localises to the nucleus. It localises to the cytoplasm. Functionally, transcription factor that acts as a key regulator of ciliogenesis. Specifically regulates expression of genes required for cilium assembly and function. Recognizes and binds the X-box, a regulatory motif with DNA sequence 5'-GTNRCC(0-3N)RGYAAC-3' present on promoters. Required for neural tube closure and neural ciliogenesis. The polypeptide is DNA-binding protein RFX2 (rfx2) (Xenopus tropicalis (Western clawed frog)).